The primary structure comprises 402 residues: 1-deoxy-D-xylulose 5-phosphate reductoisomerase (402 aa).

Positions 10, 11, 12, 13, 38, and 124 each coordinate NADPH. K125 is a 1-deoxy-D-xylulose 5-phosphate binding site. E126 provides a ligand contact to NADPH. D150 provides a ligand contact to Mn(2+). 1-deoxy-D-xylulose 5-phosphate-binding residues include S151, E152, S186, and H209. E152 provides a ligand contact to Mn(2+). An NADPH-binding site is contributed by G215. 1-deoxy-D-xylulose 5-phosphate is bound by residues S222, N227, K228, and E231. Residue E231 participates in Mn(2+) binding.

Belongs to the DXR family. Requires Mg(2+) as cofactor. Mn(2+) is required as a cofactor.

It carries out the reaction 2-C-methyl-D-erythritol 4-phosphate + NADP(+) = 1-deoxy-D-xylulose 5-phosphate + NADPH + H(+). The protein operates within isoprenoid biosynthesis; isopentenyl diphosphate biosynthesis via DXP pathway; isopentenyl diphosphate from 1-deoxy-D-xylulose 5-phosphate: step 1/6. Catalyzes the NADPH-dependent rearrangement and reduction of 1-deoxy-D-xylulose-5-phosphate (DXP) to 2-C-methyl-D-erythritol 4-phosphate (MEP). The sequence is that of 1-deoxy-D-xylulose 5-phosphate reductoisomerase from Vibrio vulnificus (strain CMCP6).